The following is a 278-amino-acid chain: Formamidopyrimidine-DNA glycosylase (278 aa).

P2 acts as the Schiff-base intermediate with DNA in catalysis. E3 functions as the Proton donor in the catalytic mechanism. K58 acts as the Proton donor; for beta-elimination activity in catalysis. DNA-binding residues include H92 and R111. Residues 239–273 (HVYGKKGVPCERCGTPIEKIKVAQRGTHFCPKCQI) form an FPG-type zinc finger. Residue R263 is the Proton donor; for delta-elimination activity of the active site.

It belongs to the FPG family. In terms of assembly, monomer. Zn(2+) serves as cofactor.

The enzyme catalyses Hydrolysis of DNA containing ring-opened 7-methylguanine residues, releasing 2,6-diamino-4-hydroxy-5-(N-methyl)formamidopyrimidine.. The catalysed reaction is 2'-deoxyribonucleotide-(2'-deoxyribose 5'-phosphate)-2'-deoxyribonucleotide-DNA = a 3'-end 2'-deoxyribonucleotide-(2,3-dehydro-2,3-deoxyribose 5'-phosphate)-DNA + a 5'-end 5'-phospho-2'-deoxyribonucleoside-DNA + H(+). Functionally, involved in base excision repair of DNA damaged by oxidation or by mutagenic agents. Acts as a DNA glycosylase that recognizes and removes damaged bases. Has a preference for oxidized purines, such as 7,8-dihydro-8-oxoguanine (8-oxoG). Has AP (apurinic/apyrimidinic) lyase activity and introduces nicks in the DNA strand. Cleaves the DNA backbone by beta-delta elimination to generate a single-strand break at the site of the removed base with both 3'- and 5'-phosphates. In Latilactobacillus sakei subsp. sakei (strain 23K) (Lactobacillus sakei subsp. sakei), this protein is Formamidopyrimidine-DNA glycosylase.